The following is a 364-amino-acid chain: Triacylglycerol lipase (364 aa).

The N-terminal stretch at 1 to 44 (MARTMRSRVVAGAVACAMSIAPFAGTTAVMTLATTHAAMAATAP) is a signal peptide. The region spanning 54-266 (PIILVHGLSG…AIQPTLSVFG (213 aa)) is the AB hydrolase-1 domain. Leu-61 contributes to the substrate binding site. Catalysis depends on Ser-131, which acts as the Nucleophile. Gln-132 lines the substrate pocket. Cys-234 and Cys-314 are oxidised to a cystine. Asp-286 is a binding site for Ca(2+). Active-site charge relay system residues include Asp-308 and His-330. Residues Asp-332, Gln-336, and Val-340 each coordinate Ca(2+).

It belongs to the AB hydrolase superfamily. Pseudomonas lipase family. As to quaternary structure, monomer. It depends on Ca(2+) as a cofactor.

The protein localises to the secreted. It carries out the reaction a triacylglycerol + H2O = a diacylglycerol + a fatty acid + H(+). Its activity is regulated as follows. Inhibited by RC-(Rp,Sp)- and SC-(Rp,Sp)-1,2-dioctylcarbamoylglycero-3-O-p-nitrophenyl octylphosphonate. Also inhibited by diethyl-p-nitrophenylphosphate (E600). Functionally, catalyzes the hydrolysis of triacylglycerol. It shows a preference for triacylglycerols with a chain length between 6 and 12 carbons. The protein is Triacylglycerol lipase of Burkholderia cepacia (Pseudomonas cepacia).